The primary structure comprises 389 residues: Protein CysO (389 aa).

An N6-(pyridoxal phosphate)lysine modification is found at K127. Residues N155, 261–265 (GTSGH), and S341 each bind pyridoxal 5'-phosphate.

It belongs to the cysteine synthase/cystathionine beta-synthase family. In terms of assembly, homodimer. Pyridoxal 5'-phosphate serves as cofactor.

It catalyses the reaction O-acetyl-L-serine + hydrogen sulfide = L-cysteine + acetate. The enzyme catalyses O-phospho-L-serine + hydrogen sulfide + H(+) = L-cysteine + phosphate. The catalysed reaction is L-homocysteine + L-serine = L,L-cystathionine + H2O. It participates in amino-acid biosynthesis; L-cysteine biosynthesis; L-cysteine from L-serine: step 2/2. Its function is as follows. Cysteine synthase that can also catalyze the synthesis of S-sulfo-L-cysteine from thiosulfate and O(3)-acetyl-L-serine, as well as the sulfhydrylation of L-serine by sulfide. The chain is Protein CysO (cysO) from Aeropyrum pernix (strain ATCC 700893 / DSM 11879 / JCM 9820 / NBRC 100138 / K1).